Consider the following 819-residue polypeptide: Leucine--tRNA ligase (819 aa).

A 'HIGH' region motif is present at residues 40–51 (PYPSGAGLHVGH). The 'KMSKS' region motif lies at 600–604 (KMSKS). Lysine 603 serves as a coordination point for ATP.

This sequence belongs to the class-I aminoacyl-tRNA synthetase family.

The protein resides in the cytoplasm. It carries out the reaction tRNA(Leu) + L-leucine + ATP = L-leucyl-tRNA(Leu) + AMP + diphosphate. The protein is Leucine--tRNA ligase of Chlamydia trachomatis serovar D (strain ATCC VR-885 / DSM 19411 / UW-3/Cx).